We begin with the raw amino-acid sequence, 124 residues long: Seripauperin-3 (124 aa).

Residues isoleucine 7–threonine 24 form a helical membrane-spanning segment.

Belongs to the SRP1/TIP1 family. Seripauperin subfamily.

The protein localises to the membrane. This is Seripauperin-3 (PAU3) from Saccharomyces cerevisiae (strain ATCC 204508 / S288c) (Baker's yeast).